The sequence spans 498 residues: Neoxanthin synthase, chloroplastic (498 aa).

The N-terminal 33 residues, 1-33 (METLLKPLTSLLLSSPTPHRSIFQQNPPSLNPT), are a transit peptide targeting the chloroplast. The tract at residues 16–38 (PTPHRSIFQQNPPSLNPTTKKKS) is disordered. Over residues 22–33 (IFQQNPPSLNPT) the composition is skewed to polar residues. 84–112 (VIIIGAGPAGLRLAEHVSKYGIKVCCVDP) is a binding site for NAD(+).

It belongs to the lycopene cyclase family.

The protein localises to the plastid. It localises to the chloroplast. The catalysed reaction is all-trans-violaxanthin = all-trans-neoxanthin. Its pathway is carotenoid biosynthesis; neoxanthin biosynthesis. In terms of biological role, involved in the synthesis of neoxanthin, the last product of carotenoid synthesis and a precursor of abscisic acid. This chain is Neoxanthin synthase, chloroplastic (NXS), found in Solanum tuberosum (Potato).